A 389-amino-acid polypeptide reads, in one-letter code: S-adenosylmethionine synthase (389 aa).

His17 contributes to the ATP binding site. Asp19 is a binding site for Mg(2+). Glu45 contacts K(+). Residues Glu58 and Gln101 each contribute to the L-methionine site. Positions 101 to 111 are flexible loop; sequence QSPDISQGVTE. Residues 168–170, 234–235, Asp243, 249–250, Ala266, and Lys270 contribute to the ATP site; these read DSK, RF, and RK. Residue Asp243 participates in L-methionine binding. Lys274 serves as a coordination point for L-methionine.

Belongs to the AdoMet synthase family. In terms of assembly, homotetramer; dimer of dimers. It depends on Mg(2+) as a cofactor. The cofactor is K(+).

The protein localises to the cytoplasm. The catalysed reaction is L-methionine + ATP + H2O = S-adenosyl-L-methionine + phosphate + diphosphate. It functions in the pathway amino-acid biosynthesis; S-adenosyl-L-methionine biosynthesis; S-adenosyl-L-methionine from L-methionine: step 1/1. Catalyzes the formation of S-adenosylmethionine (AdoMet) from methionine and ATP. The overall synthetic reaction is composed of two sequential steps, AdoMet formation and the subsequent tripolyphosphate hydrolysis which occurs prior to release of AdoMet from the enzyme. The chain is S-adenosylmethionine synthase from Syntrophotalea carbinolica (strain DSM 2380 / NBRC 103641 / GraBd1) (Pelobacter carbinolicus).